Reading from the N-terminus, the 219-residue chain is ATP-dependent Clp protease proteolytic subunit 4 (219 aa).

Serine 125 functions as the Nucleophile in the catalytic mechanism. The active site involves histidine 150.

It belongs to the peptidase S14 family. As to quaternary structure, fourteen ClpP subunits assemble into 2 heptameric rings which stack back to back to give a disk-like structure with a central cavity, resembling the structure of eukaryotic proteasomes.

The protein localises to the cytoplasm. It catalyses the reaction Hydrolysis of proteins to small peptides in the presence of ATP and magnesium. alpha-casein is the usual test substrate. In the absence of ATP, only oligopeptides shorter than five residues are hydrolyzed (such as succinyl-Leu-Tyr-|-NHMec, and Leu-Tyr-Leu-|-Tyr-Trp, in which cleavage of the -Tyr-|-Leu- and -Tyr-|-Trp bonds also occurs).. In terms of biological role, cleaves peptides in various proteins in a process that requires ATP hydrolysis. Has a chymotrypsin-like activity. Plays a major role in the degradation of misfolded proteins. In Prochlorococcus marinus (strain MIT 9312), this protein is ATP-dependent Clp protease proteolytic subunit 4.